We begin with the raw amino-acid sequence, 1342 residues long: DNA-directed RNA polymerase subunit beta (1342 aa).

The protein belongs to the RNA polymerase beta chain family. As to quaternary structure, the RNAP catalytic core consists of 2 alpha, 1 beta, 1 beta' and 1 omega subunit. When a sigma factor is associated with the core the holoenzyme is formed, which can initiate transcription.

The enzyme catalyses RNA(n) + a ribonucleoside 5'-triphosphate = RNA(n+1) + diphosphate. In terms of biological role, DNA-dependent RNA polymerase catalyzes the transcription of DNA into RNA using the four ribonucleoside triphosphates as substrates. The chain is DNA-directed RNA polymerase subunit beta from Salmonella typhimurium (strain LT2 / SGSC1412 / ATCC 700720).